The sequence spans 104 residues: Enhancer of rudimentary homolog (104 aa).

Residue S2 is modified to N-acetylserine. The residue at position 11 (T11) is a Phosphothreonine. Residue K12 forms a Glycyl lysine isopeptide (Lys-Gly) (interchain with G-Cter in SUMO2) linkage.

It belongs to the E(R) family. As to quaternary structure, homodimer.

It is found in the nucleus. May have a role in the cell cycle. The protein is Enhancer of rudimentary homolog (ERH) of Bos taurus (Bovine).